Reading from the N-terminus, the 614-residue chain is Probable zinc transporter protein DDB_G0269332 (614 aa).

2 disordered regions span residues 1-103 and 115-178; these read MSDI…LPHL and SSYN…NNEF. Topologically, residues 1–203 are cytoplasmic; that stretch reads MSDINSNSYD…NLNRDSDAKK (203 aa). Low complexity predominate over residues 17-64; the sequence is QHQQESQYHPQQQQQQQQQQQQQQEYYNQQHQQESQYQQQSPPQQQYD. Over residues 80–92 the composition is skewed to basic residues; it reads GHGRSHNSGHGHS. The segment covering 121–176 has biased composition (low complexity); it reads NNSGDISNSNNNNNNNNQYNYNNNNNNNNYNNNINNNQFNSSVYNNNNNNNNNNNN. Residues 204–224 traverse the membrane as a helical segment; that stretch reads LAAWISVMLVFTIYEIFYGAY. The Extracellular portion of the chain corresponds to 225–233; the sequence is LESLGLVSD. Residues 234–254 traverse the membrane as a helical segment; that stretch reads GFHALFDCIGMGIALLAMLVG. At 255–270 the chain is on the cytoplasmic side; sequence KRGISNQEYTYGYDRW. The helical transmembrane segment at 271–291 threads the bilayer; sequence EVLGTFSNGCFLLFVSFFLFL. Residues 292–306 are Extracellular-facing; the sequence is ESIERLLEPPHIHNH. The helical transmembrane segment at 307 to 327 threads the bilayer; sequence GRVMSLATISLIINIVGVLFF. Residues 328–351 lie on the Cytoplasmic side of the membrane; that stretch reads KQKSNERKQQSSIRSENLLTISHH. The helical transmembrane segment at 352–372 threads the bilayer; sequence ILVDSCTSLGVILSSLVGQAF. Over 373-377 the chain is Extracellular; it reads GLEIS. Residues 378–398 traverse the membrane as a helical segment; that stretch reads DSLISIIIACIIVYNALPICI. Residues 399 to 614 are Cytoplasmic-facing; that stretch reads KTSAILLQTT…NSSHSHAHNH (216 aa). Residues 483 to 614 form a disordered region; the sequence is EGKHNSHSHG…NSSHSHAHNH (132 aa). 2 stretches are compositionally biased toward basic residues: residues 487–499 and 507–523; these read NSHSHGGAHHHPH and SHNHSHGHNHGHSHGHS. The span at 525–535 shows a compositional bias: basic and acidic residues; it reads GGNDDHEHGEN. Residues 548-567 are compositionally biased toward polar residues; sequence VQPTSPFSSHYTDIHSNNTP. Positions 575–585 are enriched in acidic residues; that stretch reads QDDEDDEDDYD. The span at 586–599 shows a compositional bias: basic and acidic residues; the sequence is HDEHHHDHDHDEHH. A compositionally biased stretch (basic residues) spans 600 to 614; it reads HGHSHNSSHSHAHNH.

This sequence belongs to the cation diffusion facilitator (CDF) transporter (TC 2.A.4) family. SLC30A subfamily.

Its subcellular location is the membrane. Its function is as follows. May be involved in zinc transport from the cytoplasm to either intracellular organelles or extracellular spaces. The protein is Probable zinc transporter protein DDB_G0269332 of Dictyostelium discoideum (Social amoeba).